A 412-amino-acid polypeptide reads, in one-letter code: Argininosuccinate synthase (412 aa).

Residues 11–19 and Ala-37 contribute to the ATP site; that span reads AYSGGLDTS. Residues Tyr-88 and Ser-93 each contribute to the L-citrulline site. 116-124 is a binding site for ATP; sequence SHGATGKGN. L-aspartate contacts are provided by Thr-120, Asn-124, and Asp-125. L-citrulline is bound at residue Asn-124. 5 residues coordinate L-citrulline: Arg-128, Ser-181, Ser-190, Glu-271, and Tyr-283.

It belongs to the argininosuccinate synthase family. Homotetramer.

It is found in the cytoplasm. The protein resides in the cytosol. It carries out the reaction L-citrulline + L-aspartate + ATP = 2-(N(omega)-L-arginino)succinate + AMP + diphosphate + H(+). It functions in the pathway amino-acid biosynthesis; L-arginine biosynthesis; L-arginine from L-ornithine and carbamoyl phosphate: step 2/3. Its pathway is nitrogen metabolism; urea cycle; (N(omega)-L-arginino)succinate from L-aspartate and L-citrulline: step 1/1. One of the enzymes of the urea cycle, the metabolic pathway transforming neurotoxic amonia produced by protein catabolism into inocuous urea in the liver of ureotelic animals. Catalyzes the formation of arginosuccinate from aspartate, citrulline and ATP and together with ASL it is responsible for the biosynthesis of arginine in most body tissues. The chain is Argininosuccinate synthase from Xenopus tropicalis (Western clawed frog).